Consider the following 197-residue polypeptide: MKYIPPLNFSPVVSTDVSLYRSGYPMPLNYSFIKHQLHLKTIIYIGDKDRPLEEYQSFLESEKIKYYHIFMDSSRDEGIQERMNQVLHLVLDVRNYPILVHSNKGKHRVGVVVGIIRKLLQGWSTAGICQEYGLFSGGMKDGVDLEFITMFETNLKIPRNVIPGFAKHCLYLNELEAAEGSDDESGSESILTAKQPI.

The Tyrosine-protein phosphatase domain occupies 10–160 (SPVVSTDVSL…FETNLKIPRN (151 aa)). S181 bears the Phosphoserine mark.

The protein belongs to the protein-tyrosine phosphatase family.

The protein localises to the cytoplasm. Required for normal growth in the presence of linoleic acid hydroperoxide (LoaOOH). This is Tyrosine-protein phosphatase-like protein OCA2 (OCA2) from Saccharomyces cerevisiae (strain ATCC 204508 / S288c) (Baker's yeast).